The chain runs to 449 residues: Glucose-6-phosphate isomerase (449 aa).

E291 serves as the catalytic Proton donor. Catalysis depends on residues H312 and K426.

Belongs to the GPI family.

The protein localises to the cytoplasm. The enzyme catalyses alpha-D-glucose 6-phosphate = beta-D-fructose 6-phosphate. The protein operates within carbohydrate biosynthesis; gluconeogenesis. It participates in carbohydrate degradation; glycolysis; D-glyceraldehyde 3-phosphate and glycerone phosphate from D-glucose: step 2/4. Its function is as follows. Catalyzes the reversible isomerization of glucose-6-phosphate to fructose-6-phosphate. The protein is Glucose-6-phosphate isomerase of Streptococcus pyogenes serotype M1.